The primary structure comprises 513 residues: Aromatic amino acid aminotransferase 2 (513 aa).

Phosphoserine occurs at positions 90 and 92. Residues Y102, 143-144 (SN), N232, Y263, and 314-316 (TFS) each bind pyridoxal 5'-phosphate. Substrate is bound at residue N232. K317 bears the N6-(pyridoxal phosphate)lysine mark. R324 is a binding site for pyridoxal 5'-phosphate. R481 provides a ligand contact to substrate.

This sequence belongs to the class-I pyridoxal-phosphate-dependent aminotransferase family. It depends on pyridoxal 5'-phosphate as a cofactor.

It localises to the cytoplasm. It catalyses the reaction an aromatic L-alpha-amino acid + 2-oxoglutarate = an aromatic oxo-acid + L-glutamate. The catalysed reaction is an aromatic L-alpha-amino acid + 4-methylsulfanyl-2-oxobutanoate = an aromatic oxo-acid + L-methionine. The enzyme catalyses L-kynurenine + 2-oxoglutarate = kynurenate + L-glutamate + H2O. The protein operates within amino-acid biosynthesis; L-methionine biosynthesis via salvage pathway; L-methionine from S-methyl-5-thio-alpha-D-ribose 1-phosphate: step 6/6. It participates in amino-acid degradation; L-kynurenine degradation; kynurenate from L-kynurenine: step 1/2. In terms of biological role, general aromatic amino acid transaminase involved in several otherwise unrelated metabolic pathways. Mainly involved in tryptophan degradation. Active with phenylalanine, tyrosine and tryptophan as amino donors and with phenylpyruvate, hydroxyphenylpyruvate and pyruvate as amino acceptors. Does not accept glutamate or 2-oxoglutarate as substrates. Also active with methionine, leucine, glutamine and kynurenine. Catalyzes the formation of methionine from 2-keto-4-methylthiobutyrate (KMTB) in the methionine salvage pathway primarily using aromatic amino acids (tyrosine, phenylalanine and tryptophan) as the amino donors. Catalyzes the irreversible transamination of the L-tryptophan metabolite L-kynurenine to form kynurenic acid (KA) with pyruvate as amino acceptor. In Saccharomyces cerevisiae (strain ATCC 204508 / S288c) (Baker's yeast), this protein is Aromatic amino acid aminotransferase 2.